Here is a 1025-residue protein sequence, read N- to C-terminus: MKFFALFIYRPVATILLSVAITLCGILGFRMLPVAPLPQVDFPVIMVSASLPGASPETMASSVATPLERSLGRIAGVSEMTSSSSLGSTRIILQFDFDRDINGAARDVQAAINAAQSLLPSGMPSRPTYRKANPSDAPIMILTLTSDTYSQGELYDFASTQLAPTISQIDGVGDVDVGGSSLPAVRVGLNPQALFNQGVSLDDVRTAISNANVRKPQGALEDGTHRWQIQTNDELKTAAEYQPLIIHYNNGGAVRLGDVATVTDSVQDVRNAGMTNAKPAILLMIRKLPEANIIQTVDSIRARLPELQSTIPAAIDLQIAQDRSPTIRASLEEVEQTLIISVALVILVVFLFLRSGRATIIPAVAVPVSLIGTFAAMYLCGFSLNNLSLMALTIATGFVVDDAIVVLENIARHLEAGMKPLQAALQGTREVGFTVLSMSLSLVAVFLPLLLMGGLPGRLLREFAVTLSVAIGISLLVSLTLTPMMCGWMLKASKPREQKRLRGFGRMLVALQQGYGKSLKWVLNHTRLVGAVLLGTIALNIWLYISIPKTFFPEQDTGVLMGGIQADQSISFQAMRGKLQDFMKIIRDDPAVDNVTGFTGGSRVNSGMMFITLKPRGERSETAQQIIDRLRKKLAKEPGANLFLMAVQDIRVGGRQANASYQYTLLSDDLAALREWEPKIRKKLATLPELADVNSDQEDNGAEMNLIYDRDTMARLGIDVQAANSLLNNAFGQRQISTIYQPMNQYKVVMEVDPRYTQDISALEKMFVINNEGKAIPLSYFAKWQPANAPLSVNHQGLSAASTISFNLPTGKSLSDASAAIDRAMTQLGVPSTVRGSFAGTAQVFQETMNSQVILIIAAIATVYIVLGILYESYVHPLTILSTLPSAGVGALLALELFNAPFSLIALIGIMLLIGIVKKNAIMMVDFALEAQRHGNLTPQEAIFQACLLRFRPIMMTTLAALFGALPLVLSGGDGSELRQPLGITIVGGLVMSQLLTLYTTPVVYLFFDRLRLRFSRKPKQAVTE.

Residues 1 to 6 are Cytoplasmic-facing; it reads MKFFAL. The helical transmembrane segment at 7–29 threads the bilayer; the sequence is FIYRPVATILLSVAITLCGILGF. Residues 30 to 335 lie on the Periplasmic side of the membrane; sequence RMLPVAPLPQ…TIRASLEEVE (306 aa). The helical transmembrane segment at 336-353 threads the bilayer; sequence QTLIISVALVILVVFLFL. The Cytoplasmic portion of the chain corresponds to 354-359; sequence RSGRAT. Residues 360-379 traverse the membrane as a helical segment; the sequence is IIPAVAVPVSLIGTFAAMYL. Residues 380-388 lie on the Periplasmic side of the membrane; it reads CGFSLNNLS. The chain crosses the membrane as a helical span at residues 389–411; the sequence is LMALTIATGFVVDDAIVVLENIA. Residues 412 to 430 lie on the Cytoplasmic side of the membrane; that stretch reads RHLEAGMKPLQAALQGTRE. A helical transmembrane segment spans residues 431–453; sequence VGFTVLSMSLSLVAVFLPLLLMG. Residues 454-467 are Periplasmic-facing; it reads GLPGRLLREFAVTL. A helical membrane pass occupies residues 468 to 490; sequence SVAIGISLLVSLTLTPMMCGWML. Residues 491–852 are Cytoplasmic-facing; that stretch reads KASKPREQKR…QVFQETMNSQ (362 aa). A helical transmembrane segment spans residues 853–875; sequence VILIIAAIATVYIVLGILYESYV. Residues 876-894 lie on the Periplasmic side of the membrane; it reads HPLTILSTLPSAGVGALLA. Residues 895–917 traverse the membrane as a helical segment; sequence LELFNAPFSLIALIGIMLLIGIV. Over 918-947 the chain is Cytoplasmic; the sequence is KKNAIMMVDFALEAQRHGNLTPQEAIFQAC. Residues 948 to 970 form a helical membrane-spanning segment; the sequence is LLRFRPIMMTTLAALFGALPLVL. At 971 to 984 the chain is on the periplasmic side; that stretch reads SGGDGSELRQPLGI. A helical membrane pass occupies residues 985 to 1007; sequence TIVGGLVMSQLLTLYTTPVVYLF. Residues 1008–1025 are Cytoplasmic-facing; sequence FDRLRLRFSRKPKQAVTE.

Belongs to the resistance-nodulation-cell division (RND) (TC 2.A.6) family. MdtC subfamily. Part of a tripartite efflux system composed of MdtA, MdtB and MdtC. MdtC forms a heteromultimer with MdtB.

It localises to the cell inner membrane. Functionally, the MdtABC tripartite complex confers resistance against novobiocin and deoxycholate. This chain is Multidrug resistance protein MdtC, found in Escherichia coli O6:H1 (strain CFT073 / ATCC 700928 / UPEC).